Here is a 132-residue protein sequence, read N- to C-terminus: Sec-independent protein translocase protein TatB (132 aa).

A helical transmembrane segment spans residues 2-22 (FDGIGFMELLLIGILGLVVLG). Composition is skewed to polar residues over residues 86-95 (LKQAAQSVNR) and 116-132 (IAET…KNNG). The segment at 86 to 132 (LKQAAQSVNRPYQLDESNEQEPKIAPPQANIAETPTQSGDTHSKNNG) is disordered.

This sequence belongs to the TatB family. In terms of assembly, the Tat system comprises two distinct complexes: a TatABC complex, containing multiple copies of TatA, TatB and TatC subunits, and a separate TatA complex, containing only TatA subunits. Substrates initially bind to the TatABC complex, which probably triggers association of the separate TatA complex to form the active translocon.

Its subcellular location is the cell inner membrane. In terms of biological role, part of the twin-arginine translocation (Tat) system that transports large folded proteins containing a characteristic twin-arginine motif in their signal peptide across membranes. Together with TatC, TatB is part of a receptor directly interacting with Tat signal peptides. TatB may form an oligomeric binding site that transiently accommodates folded Tat precursor proteins before their translocation. The protein is Sec-independent protein translocase protein TatB of Shewanella denitrificans (strain OS217 / ATCC BAA-1090 / DSM 15013).